The sequence spans 149 residues: Large ribosomal subunit protein bL9 (149 aa).

It belongs to the bacterial ribosomal protein bL9 family.

Binds to the 23S rRNA. The chain is Large ribosomal subunit protein bL9 from Amoebophilus asiaticus (strain 5a2).